We begin with the raw amino-acid sequence, 492 residues long: Glutamyl-tRNA(Gln) amidotransferase subunit A (492 aa).

Active-site charge relay system residues include K78 and S158. Residue S182 is the Acyl-ester intermediate of the active site.

It belongs to the amidase family. GatA subfamily. In terms of assembly, heterotrimer of A, B and C subunits.

The enzyme catalyses L-glutamyl-tRNA(Gln) + L-glutamine + ATP + H2O = L-glutaminyl-tRNA(Gln) + L-glutamate + ADP + phosphate + H(+). In terms of biological role, allows the formation of correctly charged Gln-tRNA(Gln) through the transamidation of misacylated Glu-tRNA(Gln) in organisms which lack glutaminyl-tRNA synthetase. The reaction takes place in the presence of glutamine and ATP through an activated gamma-phospho-Glu-tRNA(Gln). The protein is Glutamyl-tRNA(Gln) amidotransferase subunit A of Rickettsia akari (strain Hartford).